Consider the following 99-residue polypeptide: Ribonuclease P protein component 1 (99 aa).

This sequence belongs to the eukaryotic/archaeal RNase P protein component 1 family. Consists of a catalytic RNA component and at least 4-5 protein subunits.

The protein localises to the cytoplasm. It carries out the reaction Endonucleolytic cleavage of RNA, removing 5'-extranucleotides from tRNA precursor.. Its function is as follows. Part of ribonuclease P, a protein complex that generates mature tRNA molecules by cleaving their 5'-ends. The sequence is that of Ribonuclease P protein component 1 from Methanococcus vannielii.